Reading from the N-terminus, the 88-residue chain is Small ribosomal subunit protein bS16c (88 aa).

The protein belongs to the bacterial ribosomal protein bS16 family.

It is found in the plastid. The protein resides in the chloroplast. This Solanum bulbocastanum (Wild potato) protein is Small ribosomal subunit protein bS16c.